The sequence spans 276 residues: Inositol-1-monophosphatase ImpA (276 aa).

Residues Glu-74, Asp-90, Ile-92, and Asp-93 each coordinate Mg(2+). Substrate is bound at residue Glu-74. Substrate contacts are provided by residues 92–95, Arg-192, and Asp-221; that span reads IDGT. Residue Asp-221 participates in Mg(2+) binding.

It belongs to the inositol monophosphatase superfamily. It depends on Mg(2+) as a cofactor.

The catalysed reaction is a myo-inositol phosphate + H2O = myo-inositol + phosphate. It functions in the pathway polyol metabolism; myo-inositol biosynthesis; myo-inositol from D-glucose 6-phosphate: step 2/2. Its function is as follows. Catalyzes the dephosphorylation of inositol 1-phosphate (I-1-P) to yield free myo-inositol, a key metabolite in mycobacteria. This is Inositol-1-monophosphatase ImpA (impA) from Mycolicibacterium smegmatis (strain ATCC 700084 / mc(2)155) (Mycobacterium smegmatis).